Here is a 514-residue protein sequence, read N- to C-terminus: piRNA biogenesis protein EXD1 (514 aa).

Residues leucine 30 to alanine 122 enclose the 3'-5' exonuclease domain. Residues serine 384 to glutamine 422 form a disordered region.

Belongs to the EXD1 family. Homodimer. Component of the PET complex, at least composed of EXD1, PIWIL2, TDRD12 and piRNAs.

It is found in the cytoplasm. RNA-binding component of the PET complex, a multiprotein complex required for the processing of piRNAs during spermatogenesis. The piRNA metabolic process mediates the repression of transposable elements during meiosis by forming complexes composed of piRNAs and Piwi proteins and governs the methylation and subsequent repression of transposable elements, preventing their mobilization, which is essential for the germline integrity. The PET complex is required during the secondary piRNAs metabolic process for the PIWIL2 slicing-triggered loading of PIWIL4 piRNAs. In the PET complex, EXD1 probably acts as an RNA adapter. EXD1 is an inactive exonuclease. The sequence is that of piRNA biogenesis protein EXD1 (EXD1) from Homo sapiens (Human).